A 772-amino-acid polypeptide reads, in one-letter code: MASSNVDSSEPRISRESSLKRSLSISKSLKGLFKSGGGNANTGPTTAAAAAAPSSISTPEVPTLATKDKQDRLKNLAANKEKELQTSRRGVASPSLSPTRHVSLSNLAKLSLTSRAGTGQVDPNVIHETSPLASDEESTDLAFGKRQSSSNRSSSFSNEEQEPNNKYPLLEKLMGDLDEMVCGSIDTQLSKSPDTVEASSLRRSRSTQRKRLNSFSLRPRALSNPGQNPNHPVENRERSNTSSIDLLMSHESESRAIYKSDQFSVYPDGHHAHHLKVVPIVHDLEQSLNKPKSSFSFSGFFKTHRTIADDGENLATALSLLPANRFSFHKRLSQIIDEENGNHNADEELEHNGNNGVDSDSDADYDNQSSGNSNPSDDESESDEDGYKGPNKSANVPKIVNEKSVIGANELKLINQLTEKIDNGFCLKGSKSDAVSSNEPSSAPRKQHLCEKYGKSIGIIGQGAYGVVKLCYKFIDPDEPDLKDNTYFHDNKLFYAVKELKPRPDEPPKKFSTRLTSEFVIGLSLSGGNKSRRSSARTHPNILNVIDLMQTPNAFYEVMEFCPSGDLYSLITRSSKSDSVLHPLEADCFMKQLLHGIQYMHAHGVAHCDIKPENLLFLPTGVLKICDFGTSSVFQTAWEKKAHFQTGPAGSEPYVAPEEFIPKQQYDPRLVDCWSCGIIYCVMVLGHYLWKIAIKGKDSVYDAFLEDMEKHGQYYVFDEMKHVSPGMNRYRTAALYHIFQVDPNKRITVDSLLKSSWMKRTKCCVTYPPRPV.

Disordered regions lie at residues 1 to 102 (MASS…TRHV), 115 to 165 (RAGT…EPNN), 185 to 241 (IDTQ…RSNT), and 344 to 396 (NADE…SANV). Positions 9-19 (SEPRISRESSL) are enriched in basic and acidic residues. Low complexity-rich tracts occupy residues 20–33 (KRSL…KGLF) and 41–59 (NTGP…ISTP). The segment covering 66–86 (TKDKQDRLKNLAANKEKELQT) has biased composition (basic and acidic residues). The segment covering 146 to 158 (RQSSSNRSSSFSN) has biased composition (low complexity). Positions 202–212 (RRSRSTQRKRL) are enriched in basic residues. Residues 454–758 (GKSIGIIGQG…VDSLLKSSWM (305 aa)) form the Protein kinase domain. Residues 460-468 (IGQGAYGVV) and Lys-498 each bind ATP. The active-site Proton acceptor is Asp-609.

The protein belongs to the protein kinase superfamily. CAMK Ser/Thr protein kinase family. NPR/HAL subfamily. HAL5 sub-subfamily.

It catalyses the reaction L-seryl-[protein] + ATP = O-phospho-L-seryl-[protein] + ADP + H(+). It carries out the reaction L-threonyl-[protein] + ATP = O-phospho-L-threonyl-[protein] + ADP + H(+). This Kluyveromyces lactis (strain ATCC 8585 / CBS 2359 / DSM 70799 / NBRC 1267 / NRRL Y-1140 / WM37) (Yeast) protein is Probable serine/threonine-protein kinase HAL5-like.